Here is a 224-residue protein sequence, read N- to C-terminus: Late embryogenesis abundant protein, group 3 (224 aa).

Disordered stretches follow at residues 1 to 169 (MASN…KDKT) and 193 to 224 (NTLG…TRNH). A compositionally biased stretch (basic and acidic residues) spans 13–23 (GETKARNEEKT). 5 repeat units span residues 26 to 36 (VMGATKDKAGQ), 37 to 47 (TTEATKQKAGE), 48 to 58 (TTEATKQKAAE), 59 to 69 (TTEAAKQKASE), and 70 to 80 (TAEATKQKAAE). Positions 26-153 (VMGATKDKAG…TEAAKQKASE (128 aa)) are 12 X 11 AA tandem repeats. Composition is skewed to basic and acidic residues over residues 41–85 (TKQK…KDKT), 92–109 (AKEK…RAAQ), and 120–151 (EKTE…KQKA). Residues 81–87 (AKDKTAQ) form a 6; truncated repeat. Repeat copies occupy residues 88 to 98 (TAQAAKEKTYE), 99 to 109 (TAQSAKERAAQ), 121 to 131 (KTEAAKQKAAE), 132 to 142 (TTEAARQKAAE), and 143 to 153 (ATEAAKQKASE). Residues 200-224 (DNTITTKDNTTGATTKDTTTTTRNH) show a composition bias toward low complexity.

Belongs to the LEA type 4 family.

The sequence is that of Late embryogenesis abundant protein, group 3 from Triticum aestivum (Wheat).